The sequence spans 578 residues: MPRGLELLIAQTILQGFDAQYGRFLEVTSGAQQRFEQADWHAVQQAMKNRIHLYDHHVGLVVEQLRCITNGQSTDAAFLLRVKEHYTRLLPDYPRFEIAESFFNSVYCRLFDHRSLTPERLFIFSSQPERRFRTIPRPLAKDFHPDHGWESLLMRVISDLPLRLRWQNKSRDIHYIIRHLTETLGTDNLAESHLQVANELFYRNKAAWLVGKLITSSGTLPFLLPIHQTDDGELFIDTCLTTTAEASIVFGFARSYFMVYAPLPAALVEWLREILPGKTTAELYMAIGCQKHAKTESYREYLVYLQGCNEQFIEAPGIRGMVMLVFTLPGFDRVFKVIKDKFAPQKEMSAAHVRACYQLVKEHDRVGRMADTQEFENFVLEKRHISPALMELLLQEAAEKITDLGEQIVIRHLYIERRMVPLNIWLEQVEGQQLRDAIEEYGNAIRQLAAANIFPGDMLFKNFGVTRHGRVVFYDYDEICYMTEVNFRDIPPPRYPEDELASEPWYSVSPGDVFPEEFRHWLCADPRIGPLFEEMHADLFRADYWRALQNRIREGHVEDVYAYRRRQRFSVRYGEMLF.

ATP is bound by residues 315–321 (APGIRGM) and K336. The active site involves D371.

It belongs to the AceK family.

It localises to the cytoplasm. It carries out the reaction L-seryl-[isocitrate dehydrogenase] + ATP = O-phospho-L-seryl-[isocitrate dehydrogenase] + ADP + H(+). Functionally, bifunctional enzyme which can phosphorylate or dephosphorylate isocitrate dehydrogenase (IDH) on a specific serine residue. This is a regulatory mechanism which enables bacteria to bypass the Krebs cycle via the glyoxylate shunt in response to the source of carbon. When bacteria are grown on glucose, IDH is fully active and unphosphorylated, but when grown on acetate or ethanol, the activity of IDH declines drastically concomitant with its phosphorylation. In Escherichia coli (strain ATCC 8739 / DSM 1576 / NBRC 3972 / NCIMB 8545 / WDCM 00012 / Crooks), this protein is Isocitrate dehydrogenase kinase/phosphatase.